The sequence spans 1730 residues: Myosin-7 (1730 aa).

In terms of domain architecture, Myosin N-terminal SH3-like spans 8–56 (TVGSHVWVEDPDDAWIDGEVEEVNSEEITVNCSGKTVVAKLNNVYPKDP). The 671-residue stretch at 61–731 (LGVDDMTKLA…QMAEMDAHRA (671 aa)) folds into the Myosin motor domain. ATP-binding positions include 155 to 162 (GESGAGKT) and 208 to 216 (NNNSSRFGK). 4 actin-binding regions span residues 494–528 (LIEK…YQTF), 530–553 (NHKR…AGDV), 588–612 (FPPL…KQQL), and 612–634 (LQSL…KPNN). IQ domains lie at 757–786 (LQAA…EAAS), 782–811 (REAA…SACS), 831–850 (RRAT…HQRY), and 853–882 (TKKA…AAKE). Positions 883-1224 (TGALQDAKTK…VSDMETAEQI (342 aa)) form a coiled coil. The region spanning 1327-1678 (DRIVPVFGSA…ISNLKLLLTN (352 aa)) is the Dilute domain. 2 disordered regions span residues 1367–1387 (QSST…FGRM) and 1456–1520 (DSSV…SSEE). Residues 1456 to 1465 (DSSVVNSPSK) are compositionally biased toward low complexity. The span at 1475–1508 (SSEENSPKKSSEENSPKESSGDKSPQKLSDDNSP) shows a compositional bias: basic and acidic residues.

This sequence belongs to the TRAFAC class myosin-kinesin ATPase superfamily. Myosin family. Plant myosin class XI subfamily. As to quaternary structure, homodimer.

In terms of biological role, myosin heavy chain that is required for the cell cycle-regulated transport of various organelles and proteins for their segregation. Functions by binding with its tail domain to receptor proteins on organelles and exerting force with its N-terminal motor domain against actin filaments, thereby transporting its cargo along polarized actin cables. In Arabidopsis thaliana (Mouse-ear cress), this protein is Myosin-7 (XI-A).